A 347-amino-acid polypeptide reads, in one-letter code: uncharacterized protein (347 aa).

The protein belongs to the MG067/MG068/MG395 family.

This is an uncharacterized protein from Mycoplasma pneumoniae (strain ATCC 29342 / M129 / Subtype 1) (Mycoplasmoides pneumoniae).